A 96-amino-acid chain; its full sequence is Keratin-associated protein 12-1 (96 aa).

14 repeat units span residues cysteine 10–cysteine 14, cysteine 15–proline 19, cysteine 24–valine 28, cysteine 30–valine 34, cysteine 35–serine 39, cysteine 45–arginine 49, cysteine 50–valine 54, cysteine 55–serine 59, cysteine 60–valine 64, cysteine 70–glycine 74, cysteine 75–serine 79, cysteine 80–leucine 84, cysteine 85–serine 89, and cysteine 90–serine 94. Residues cysteine 10–serine 94 are 14 X 5 AA approximate repeats.

It belongs to the KRTAP type 12 family. Interacts with hair keratins. Restricted to a narrow region of the hair fiber cuticle, lying approximately 20 cell layers above the apex of the dermal papilla of the hair root; not detected in any other tissues.

In terms of biological role, in the hair cortex, hair keratin intermediate filaments are embedded in an interfilamentous matrix, consisting of hair keratin-associated proteins (KRTAP), which are essential for the formation of a rigid and resistant hair shaft through their extensive disulfide bond cross-linking with abundant cysteine residues of hair keratins. The matrix proteins include the high-sulfur and high-glycine-tyrosine keratins. The protein is Keratin-associated protein 12-1 (KRTAP12-1) of Homo sapiens (Human).